The following is a 356-amino-acid chain: Phosphatidylglycerol--prolipoprotein diacylglyceryl transferase (356 aa).

The next 4 membrane-spanning stretches (helical) occupy residues 24 to 44 (IKWY…LACV), 59 to 79 (WFVF…SFII), 103 to 123 (LAIE…FPLV), and 144 to 164 (VSMW…QIIG). Arg-165 is an a 1,2-diacyl-sn-glycero-3-phospho-(1'-sn-glycerol) binding site. The next 2 membrane-spanning stretches (helical) occupy residues 209-229 (PFFL…YIGG) and 265-285 (FATS…LLVC).

It belongs to the Lgt family.

It is found in the cell membrane. It catalyses the reaction L-cysteinyl-[prolipoprotein] + a 1,2-diacyl-sn-glycero-3-phospho-(1'-sn-glycerol) = an S-1,2-diacyl-sn-glyceryl-L-cysteinyl-[prolipoprotein] + sn-glycerol 1-phosphate + H(+). It functions in the pathway protein modification; lipoprotein biosynthesis (diacylglyceryl transfer). Catalyzes the transfer of the diacylglyceryl group from phosphatidylglycerol to the sulfhydryl group of the N-terminal cysteine of a prolipoprotein, the first step in the formation of mature lipoproteins. This is Phosphatidylglycerol--prolipoprotein diacylglyceryl transferase from Malacoplasma penetrans (strain HF-2) (Mycoplasma penetrans).